Consider the following 259-residue polypeptide: Ribosomal RNA small subunit methyltransferase J (259 aa).

S-adenosyl-L-methionine contacts are provided by residues 101-102, 117-118, 153-154, and Asp176; these read RD, ER, and SS.

Belongs to the methyltransferase superfamily. RsmJ family.

It localises to the cytoplasm. The catalysed reaction is guanosine(1516) in 16S rRNA + S-adenosyl-L-methionine = N(2)-methylguanosine(1516) in 16S rRNA + S-adenosyl-L-homocysteine + H(+). Functionally, specifically methylates the guanosine in position 1516 of 16S rRNA. This is Ribosomal RNA small subunit methyltransferase J from Aliivibrio fischeri (strain MJ11) (Vibrio fischeri).